The sequence spans 345 residues: SLAM family member 5 (345 aa).

Residues 1–21 form the signal peptide; that stretch reads MAQHHLWILLLCLQTWPEAAG. Topologically, residues 22–225 are extracellular; that stretch reads KDSEIFTVNG…AMGFRTHHTG (204 aa). In terms of domain architecture, Ig-like V-type spans 26–129; it reads IFTVNGILGE…TTKRYNLQIY (104 aa). The 73-residue stretch at 135 to 207 folds into the Ig-like C2-type domain; it reads PKITQSLMAS…PVSNNSDSIS (73 aa). Asparagine 150 is a glycosylation site (N-linked (GlcNAc...) asparagine). The cysteines at positions 155 and 193 are disulfide-linked. Residues 226–246 form a helical membrane-spanning segment; the sequence is LLSVLAMFFLLVLILSSVFLF. Topologically, residues 247-345 are cytoplasmic; sequence RLFKRRQGRI…PGTSSYEIVI (99 aa). The ITSM 1 motif lies at 277 to 282; the sequence is TIYTYI. At tyrosine 279 the chain carries Phosphotyrosine. The residue at position 296 (tyrosine 296) is a Phosphotyrosine; by LYN. The short motif at 314-319 is the ITSM 2 element; the sequence is TVYSEV. Tyrosine 316 carries the phosphotyrosine modification. The tract at residues 326-345 is disordered; the sequence is GKASTQDSKPPGTSSYEIVI. Over residues 328-345 the composition is skewed to polar residues; it reads ASTQDSKPPGTSSYEIVI. Tyrosine 341 is subject to Phosphotyrosine; by FES.

In terms of assembly, homodimer; via its extracellular domain. Forms a head to tail dimer with a CD48 molecule from another cell. Interacts with SH2 domain-containing proteins SH2D1A/SAP and SH2D1B/EAT-2. Interacts with tyrosine-protein phosphatases PTPN6/SHP-1 and PTPN11//SHP-2 via its phosphorylated cytoplasmic domain, and this interaction is blocked by SH2D1A. Interacts (via phosphorylated ITSM 1 and 2) with INPP5D/SHIP1. Phosphorylated by tyrosine-protein kinase LCK on tyrosine residues following ligation induced by agonist monoclonal antibody. The association with SH2D1A is dependent of tyrosine phosphorylation of its cytoplasmic domain. Phosphorylated on Tyr-296 and Tyr-316 following platelet aggregation. Phosphorylated on tyrosine residues upon high affinity immunoglobulin epsilon receptor aggregation in mast cells. In terms of processing, N-glycosylated. In terms of tissue distribution, predominantly expressed in hematopoietic tissues, such as lymph node, spleen and peripheral leukocytes. Expressed in macrophages, B-cells, monocytes, platelets, thymocytes, T-cells and dendritic cells. Highly expressed in memory T-cells. Expressed in mast cells.

The protein resides in the cell membrane. Self-ligand receptor of the signaling lymphocytic activation molecule (SLAM) family. SLAM receptors triggered by homo- or heterotypic cell-cell interactions are modulating the activation and differentiation of a wide variety of immune cells and thus are involved in the regulation and interconnection of both innate and adaptive immune response. Activities are controlled by presence or absence of small cytoplasmic adapter proteins, SH2D1A/SAP and/or SH2D1B/EAT-2. Can mediate natural killer (NK) cell cytotoxicity dependent on SH2D1A and SH2D1B. Increases proliferative responses of activated T-cells and SH2D1A/SAP does not seem be required for this process. Homophilic interactions enhance interferon gamma/IFNG secretion in lymphocytes and induce platelet stimulation via a SH2D1A-dependent pathway. May serve as a marker for hematopoietic progenitor cells Required for a prolonged T-cell:B-cell contact, optimal T follicular helper function, and germinal center formation. In germinal centers involved in maintaining B-cell tolerance and in preventing autoimmunity. In mast cells negatively regulates high affinity immunoglobulin epsilon receptor signaling; independent of SH2D1A and SH2D1B but implicating FES and PTPN6/SHP-1. In macrophages enhances LPS-induced MAPK phosphorylation and NF-kappaB activation and modulates LPS-induced cytokine secretion; involving ITSM 2. Positively regulates macroautophagy in primary dendritic cells via stabilization of IRF8; inhibits TRIM21-mediated proteasomal degradation of IRF8. This is SLAM family member 5 (CD84) from Homo sapiens (Human).